Consider the following 286-residue polypeptide: ATP synthase gamma chain (286 aa).

The protein belongs to the ATPase gamma chain family. As to quaternary structure, F-type ATPases have 2 components, CF(1) - the catalytic core - and CF(0) - the membrane proton channel. CF(1) has five subunits: alpha(3), beta(3), gamma(1), delta(1), epsilon(1). CF(0) has three main subunits: a, b and c.

It localises to the cell inner membrane. In terms of biological role, produces ATP from ADP in the presence of a proton gradient across the membrane. The gamma chain is believed to be important in regulating ATPase activity and the flow of protons through the CF(0) complex. This is ATP synthase gamma chain from Shewanella sp. (strain ANA-3).